Consider the following 77-residue polypeptide: U8-lycotoxin-Ls1w (77 aa).

A signal peptide spans 1–20; that stretch reads MKLIIFTGLVLFAIVSLIEA. Positions 21-26 are excised as a propeptide; the sequence is QAENEK.

It belongs to the neurotoxin 19 (CSTX) family. 08 (U8-Lctx) subfamily. In terms of processing, contains 4 disulfide bonds. As to expression, expressed by the venom gland.

It localises to the secreted. This Lycosa singoriensis (Wolf spider) protein is U8-lycotoxin-Ls1w.